We begin with the raw amino-acid sequence, 177 residues long: MAELATIARPYAEALFRAAPKGEAAGWAEQVAALGAVAADPVLRQFADSPKVAAQQVFDLVAGVTKQTLVPGVQNLLRAMIENGRLSALPEVAAQFHALVNASSGVSDAIVYSAFPIEPAALADLVATLEKRFGRRLSATVQLEPELIGGVRVVVGDEVLDTSVKARLEHMKVALTA.

The protein belongs to the ATPase delta chain family. As to quaternary structure, F-type ATPases have 2 components, F(1) - the catalytic core - and F(0) - the membrane proton channel. F(1) has five subunits: alpha(3), beta(3), gamma(1), delta(1), epsilon(1). CF(0) has four main subunits: a(1), b(1), b'(1) and c(10-14). The alpha and beta chains form an alternating ring which encloses part of the gamma chain. F(1) is attached to F(0) by a central stalk formed by the gamma and epsilon chains, while a peripheral stalk is formed by the delta, b and b' chains.

It is found in the cell inner membrane. Its function is as follows. F(1)F(0) ATP synthase produces ATP from ADP in the presence of a proton or sodium gradient. F-type ATPases consist of two structural domains, F(1) containing the extramembraneous catalytic core and F(0) containing the membrane proton channel, linked together by a central stalk and a peripheral stalk. During catalysis, ATP synthesis in the catalytic domain of F(1) is coupled via a rotary mechanism of the central stalk subunits to proton translocation. Functionally, this protein is part of the stalk that links CF(0) to CF(1). It either transmits conformational changes from CF(0) to CF(1) or is implicated in proton conduction. The chain is ATP synthase subunit delta from Methylibium petroleiphilum (strain ATCC BAA-1232 / LMG 22953 / PM1).